A 122-amino-acid polypeptide reads, in one-letter code: Lithostathine (122 aa).

Residues 1–26 (MLPSMSLPSLXWMLLSCLMLLSQVQG) form the signal peptide. Positions 27–37 (EDSPADTPSAR) are excised as a propeptide. Residues 38–122 (ISCPKGSMAY…LEPNAGGWEW (85 aa)) form the C-type lectin domain. Cysteines 40 and 51 form a disulfide.

Cleaved to give an A chain and a B chain joined by a disulfide bond. In terms of tissue distribution, in pancreatic acinar cells.

It localises to the secreted. Might act as an inhibitor of spontaneous calcium carbonate precipitation. The chain is Lithostathine (PTP) from Sus scrofa (Pig).